The sequence spans 878 residues: Serine/threonine-protein kinase D2 (878 aa).

Positions 1–12 are enriched in low complexity; it reads MATAPSYPAGLP. The segment at 1–35 is disordered; that stretch reads MATAPSYPAGLPGSPGPGSPPPPGGLELQSPPPLL. Residues 14–35 show a composition bias toward pro residues; sequence SPGPGSPPPPGGLELQSPPPLL. Residue S30 is modified to Phosphoserine. Y87 is modified (phosphotyrosine). The Phorbol-ester/DAG-type 1 zinc finger occupies 138 to 188; sequence PHALTVHSYRAPAFCDHCGEMLFGLVRQGLKCDGCGLNYHKRCAFSIPNNC. Phosphoserine is present on residues S197, S198, S200, S203, S206, S212, and S214. Residues 224–247 form a disordered region; sequence RSTTELLPRRPPSSSSSSSASSYT. A compositionally biased stretch (low complexity) spans 236–245; it reads SSSSSSSASS. Position 244 is a phosphoserine; by CSNK1D and CSNK1E (S244). Residues 264-314 form a Phorbol-ester/DAG-type 2 zinc finger; sequence PHTFLIHSYTRPTVCQACKKLLKGLFRQGLQCKDCKFNCHKRCATRVPNDC. Residues 343–373 form a disordered region; it reads ESEDSGVIPGSHSENALHASEEEEGEGGKAQ. The PH domain maps to 397–509; that stretch reads TTLREGWVVH…WETAIRQALM (113 aa). Y407 bears the Phosphotyrosine mark. Y438 is subject to Phosphotyrosine; by ABL1. S518 carries the post-translational modification Phosphoserine. Positions 551 to 807 constitute a Protein kinase domain; that stretch reads IFPDEVLGSG…VDKSLSHPWL (257 aa). Residues 557-565 and K580 contribute to the ATP site; that span reads LGSGQFGVV. D674 serves as the catalytic Proton acceptor. S706 carries the phosphoserine; by PKC modification. S710 is modified (phosphoserine). Phosphotyrosine; by ABL1 is present on Y717. The Important for ABL1-mediated Tyr-717 phosphorylation motif lies at 724–726; it reads LNQ. The interval 844 to 869 is disordered; that stretch reads HPLPGSGLPTDRDLGGACPPQDHDMQ. Position 876 is a phosphoserine; by autocatalysis (S876).

This sequence belongs to the protein kinase superfamily. CAMK Ser/Thr protein kinase family. PKD subfamily. Interacts (via C-terminus) with LCK. Interacts (via N-terminal AP-rich region) with CIB1 isoform 2. Interacts (via N-terminus and zing-finger domain 1 and 2) with PRKCD in response to oxidative stress; the interaction is independent of PRKD2 tyrosine phosphorylation. Mg(2+) serves as cofactor. Phosphorylation of Ser-876 correlates with the activation status of the kinase. Ser-706 or/and Ser-710 are probably phosphorylated by PKC. Phosphorylation at Ser-244 by CSNK1D and CSNK1E promotes nuclear localization and substrate targeting. Phosphorylation at Ser-244, Ser-706 and Ser-710 is required for nuclear localization. Phosphorylated at Tyr-438 by ABL1 in response to oxidative stress. Phosphorylated at Tyr-717 by ABL1 specifically in response to oxidative stress; requires prior phosphorylation at Ser-706 or/and Ser-710. Widely expressed.

The protein localises to the cytoplasm. The protein resides in the cell membrane. It is found in the nucleus. Its subcellular location is the golgi apparatus. It localises to the trans-Golgi network. The enzyme catalyses L-seryl-[protein] + ATP = O-phospho-L-seryl-[protein] + ADP + H(+). It catalyses the reaction L-threonyl-[protein] + ATP = O-phospho-L-threonyl-[protein] + ADP + H(+). With respect to regulation, activated by DAG and phorbol esters. Phorbol-ester/DAG-type domains bind DAG, mediating translocation to membranes. Autophosphorylation of Ser-710 and phosphorylation of Ser-706 by PKC relieves auto-inhibition by the PH domain. Catalytic activity is further increased by phosphorylation at Tyr-717 in response to oxidative stress. Functionally, serine/threonine-protein kinase that converts transient diacylglycerol (DAG) signals into prolonged physiological effects downstream of PKC, and is involved in the regulation of cell proliferation via MAPK1/3 (ERK1/2) signaling, oxidative stress-induced NF-kappa-B activation, inhibition of HDAC7 transcriptional repression, signaling downstream of T-cell antigen receptor (TCR) and cytokine production, and plays a role in Golgi membrane trafficking, angiogenesis, secretory granule release and cell adhesion. May potentiate mitogenesis induced by the neuropeptide bombesin by mediating an increase in the duration of MAPK1/3 (ERK1/2) signaling, which leads to accumulation of immediate-early gene products including FOS that stimulate cell cycle progression. In response to oxidative stress, is phosphorylated at Tyr-438 and Tyr-717 by ABL1, which leads to the activation of PRKD2 without increasing its catalytic activity, and mediates activation of NF-kappa-B. In response to the activation of the gastrin receptor CCKBR, is phosphorylated at Ser-244 by CSNK1D and CSNK1E, translocates to the nucleus, phosphorylates HDAC7, leading to nuclear export of HDAC7 and inhibition of HDAC7 transcriptional repression of NR4A1/NUR77. Upon TCR stimulation, is activated independently of ZAP70, translocates from the cytoplasm to the nucleus and is required for interleukin-2 (IL2) promoter up-regulation. During adaptive immune responses, is required in peripheral T-lymphocytes for the production of the effector cytokines IL2 and IFNG after TCR engagement and for optimal induction of antibody responses to antigens. In epithelial cells stimulated with lysophosphatidic acid (LPA), is activated through a PKC-dependent pathway and mediates LPA-stimulated interleukin-8 (IL8) secretion via a NF-kappa-B-dependent pathway. During TCR-induced T-cell activation, interacts with and is activated by the tyrosine kinase LCK, which results in the activation of the NFAT transcription factors. In the trans-Golgi network (TGN), regulates the fission of transport vesicles that are on their way to the plasma membrane and in polarized cells is involved in the transport of proteins from the TGN to the basolateral membrane. Plays an important role in endothelial cell proliferation and migration prior to angiogenesis, partly through modulation of the expression of KDR/VEGFR2 and FGFR1, two key growth factor receptors involved in angiogenesis. In secretory pathway, is required for the release of chromogranin-A (CHGA)-containing secretory granules from the TGN. Downstream of PRKCA, plays important roles in angiotensin-2-induced monocyte adhesion to endothelial cells. Plays a regulatory role in angiogenesis and tumor growth by phosphorylating a downstream mediator CIB1 isoform 2, resulting in vascular endothelial growth factor A (VEGFA) secretion. The chain is Serine/threonine-protein kinase D2 (PRKD2) from Homo sapiens (Human).